The chain runs to 926 residues: LPS-assembly protein LptD (926 aa).

The N-terminal stretch at 1–22 (MALKSPAFRKKFPLLVTGSLLA) is a signal peptide. Residues 58-99 (VDLPPRPVHDTTSVSSNGTVTSQSTSSGEQVAGTQLVTEAKG) are disordered. Residues 68-85 (TTSVSSNGTVTSQSTSSG) are compositionally biased toward low complexity.

This sequence belongs to the LptD family. Component of the lipopolysaccharide transport and assembly complex. Interacts with LptE and LptA.

It is found in the cell outer membrane. Its function is as follows. Together with LptE, is involved in the assembly of lipopolysaccharide (LPS) at the surface of the outer membrane. This Pseudomonas savastanoi pv. phaseolicola (strain 1448A / Race 6) (Pseudomonas syringae pv. phaseolicola (strain 1448A / Race 6)) protein is LPS-assembly protein LptD.